The following is a 303-amino-acid chain: DCN1-like protein 3 (303 aa).

Disordered stretches follow at residues 1 to 41 and 62 to 83; these read MGQC…HLSI and EASQ…TGAE. Gly-2 carries N-myristoyl glycine lipidation. One can recognise a DCUN1 domain in the interval 85 to 277; that stretch reads SSVQRIEELF…LFDTFVEWEM (193 aa). The interval 284-303 is disordered; that stretch reads EETKCIPCSGTDDQSTEGQT. Residues 294-303 show a composition bias toward polar residues; the sequence is TDDQSTEGQT.

In terms of assembly, may interact (via the DCUN1 domain) with unneddylated cullins.

The protein resides in the cell membrane. The protein localises to the cytoplasm. It localises to the nucleus. Its subcellular location is the perinuclear region. Its function is as follows. Contributes to the neddylation of all cullins by transferring NEDD8 from N-terminally acetylated NEDD8-conjugating E2s enzyme to different cullin C-terminal domain-RBX complexes. At the cell membrane, can promote and as well inhibit cullins neddylation. The protein is DCN1-like protein 3 of Xenopus tropicalis (Western clawed frog).